The primary structure comprises 330 residues: GMP reductase (330 aa).

C180 acts as the Thioimidate intermediate in catalysis. 209–232 (LIADGGIRHNGDIAKSVRFGASMV) contributes to the NADP(+) binding site.

It belongs to the IMPDH/GMPR family. GuaC type 2 subfamily.

The enzyme catalyses IMP + NH4(+) + NADP(+) = GMP + NADPH + 2 H(+). In terms of biological role, catalyzes the irreversible NADPH-dependent deamination of GMP to IMP. It functions in the conversion of nucleobase, nucleoside and nucleotide derivatives of G to A nucleotides, and in maintaining the intracellular balance of A and G nucleotides. The chain is GMP reductase from Lactobacillus delbrueckii subsp. bulgaricus (strain ATCC BAA-365 / Lb-18).